The primary structure comprises 129 residues: Histone H2B.1 (129 aa).

Positions 1–19 (MAPKAEKKPASKAPAEKKP) are enriched in basic and acidic residues. The interval 1–37 (MAPKAEKKPASKAPAEKKPAAKKTASTDSKKRTKTRK) is disordered. Lys7 and Lys8 each carry N6-acetyllysine; alternate. Glycyl lysine isopeptide (Lys-Gly) (interchain with G-Cter in SUMO); alternate cross-links involve residues Lys7 and Lys8. Ser11 is subject to Phosphoserine. Lys12 bears the N6-acetyllysine mark. N6-acetyllysine; alternate is present on Lys17. Residue Lys17 forms a Glycyl lysine isopeptide (Lys-Gly) (interchain with G-Cter in SUMO); alternate linkage. Residue Lys18 forms a Glycyl lysine isopeptide (Lys-Gly) (interchain with G-Cter in SUMO) linkage. Lys123 is covalently cross-linked (Glycyl lysine isopeptide (Lys-Gly) (interchain with G-Cter in ubiquitin)).

Belongs to the histone H2B family. As to quaternary structure, the nucleosome is a histone octamer containing two molecules each of H2A, H2B, H3 and H4 assembled in one H3-H4 heterotetramer and two H2A-H2B heterodimers. The octamer wraps approximately 147 bp of DNA. Post-translationally, monoubiquitinated by the UBC2-BRE1 complex to form H2BK123ub1. H2BK123ub1 gives a specific tag for epigenetic transcriptional activation and is also prerequisite for H3K4me and H3K79me formation. H2BK123ub1 also modulates the formation of double-strand breaks during meiosis and is a prerequisite for DNA-damage checkpoint activation. Phosphorylated by STE20 to form H2BS10ph during progression through meiotic prophase. May be correlated with chromosome condensation. In terms of processing, acetylated by GCN5 to form H2BK11ac and H2BK16ac. H2BK16ac can also be formed by ESA1. Acetylation of N-terminal lysines and particularly formation of H2BK11acK16ac has a positive effect on transcription. Post-translationally, sumoylation to form H2BK6su or H2BK7su, and probably also H2BK16su or H2BK17su, occurs preferentially near the telomeres and represses gene transcription.

It is found in the nucleus. The protein resides in the chromosome. Core component of nucleosome. Nucleosomes wrap and compact DNA into chromatin, limiting DNA accessibility to the cellular machineries which require DNA as a template. Histones thereby play a central role in transcription regulation, DNA repair, DNA replication and chromosomal stability. DNA accessibility is regulated via a complex set of post-translational modifications of histones, also called histone code, and nucleosome remodeling. This Meyerozyma guilliermondii (strain ATCC 6260 / CBS 566 / DSM 6381 / JCM 1539 / NBRC 10279 / NRRL Y-324) (Yeast) protein is Histone H2B.1 (HTB1).